The primary structure comprises 504 residues: uncharacterized protein (504 aa).

Disordered stretches follow at residues 1–59 (MSSS…KNEY) and 171–255 (GVNS…NQRL). Composition is skewed to basic and acidic residues over residues 36–50 (KPIDKEKEKEKKEIG) and 199–212 (RAETPKGRKTESRQ). The span at 213–232 (SNRGNNDNGDQRMTSKATTR) shows a compositional bias: polar residues.

This is an uncharacterized protein from Caenorhabditis elegans.